Here is a 252-residue protein sequence, read N- to C-terminus: Adenosylcobinamide-GDP ribazoletransferase (252 aa).

7 consecutive transmembrane segments (helical) span residues 35 to 55 (AMLP…FYIL), 58 to 78 (IFPA…LIGG), 113 to 133 (FAVL…SFII), 139 to 159 (YAII…FLIG), 170 to 190 (LFIE…MIVP), 192 to 212 (VLLI…IITL), and 231 to 251 (GANN…LLYI).

Belongs to the CobS family. The cofactor is Mg(2+).

It localises to the cell membrane. The catalysed reaction is alpha-ribazole + adenosylcob(III)inamide-GDP = adenosylcob(III)alamin + GMP + H(+). The enzyme catalyses alpha-ribazole 5'-phosphate + adenosylcob(III)inamide-GDP = adenosylcob(III)alamin 5'-phosphate + GMP + H(+). The protein operates within cofactor biosynthesis; adenosylcobalamin biosynthesis; adenosylcobalamin from cob(II)yrinate a,c-diamide: step 7/7. Joins adenosylcobinamide-GDP and alpha-ribazole to generate adenosylcobalamin (Ado-cobalamin). Also synthesizes adenosylcobalamin 5'-phosphate from adenosylcobinamide-GDP and alpha-ribazole 5'-phosphate. The protein is Adenosylcobinamide-GDP ribazoletransferase of Clostridium tetani (strain Massachusetts / E88).